A 412-amino-acid polypeptide reads, in one-letter code: GATOR complex protein NPRL2 (412 aa).

Belongs to the NPR2 family. Component of the GATOR complex consisting of mio, Nup44A/Seh1, Im11, Nplr3, Nplr2, Wdr24, Wdr59 and Sec13. Within the GATOR complex, probable component of the GATOR1 subcomplex which is likely composed of Iml1, Nplr2 and Nplr3. Interacts with Nprl3.

It localises to the cytoplasm. Its subcellular location is the lysosome. Its function is as follows. An essential component of the GATOR subcomplex GATOR1 which functions as an inhibitor of the amino acid-sensing branch of the TORC1 signaling pathway. The two GATOR subcomplexes, GATOR1 and GATOR2, regulate the TORC1 pathway in order to mediate metabolic homeostasis, female gametogenesis and the response to amino acid limitation and complete starvation. The function of GATOR1 in negatively regulating the TORC1 pathway is essential for maintaining baseline levels of TORC1 activity under nutrient rich conditions, and for promoting survival during amino acid or complete starvation by inhibiting TORC1-dependent cell growth and promoting catabolic metabolism and autophagy. In addition, this inhibition of TORC1 is necessary to maintain female fertility under normal conditions and during periods of nutrient stress. GATOR1 and GATOR2 act at different stages of oogenesis to regulate TORC1 in order to control meiotic entry and promote oocyte growth and development. After exactly four mitotic cyst divisions, the GATOR1 complex members (Iml1, Nprl2 and Nprl3) down-regulate TORC1 to slow cellular metabolism and promote the mitotic/meiotic transition. At later stages of oogenesis, the mio and Nup44A components of the GATOR2 complex inhibit GATOR1 and thus activate TORC1 to promote meiotic progression, and drive oocyte growth and development. The chain is GATOR complex protein NPRL2 from Drosophila melanogaster (Fruit fly).